A 192-amino-acid chain; its full sequence is Probable GTP-binding protein EngB (192 aa).

Positions 22 to 192 (NLPQIVIVGR…QVLSIFEKYA (171 aa)) constitute an EngB-type G domain. Residues 30–37 (GRSNVGKS), 57–61 (GKTRG), 75–78 (DLPG), 142–145 (TKAD), and 173–175 (FSA) each bind GTP. Mg(2+) contacts are provided by serine 37 and threonine 59.

Belongs to the TRAFAC class TrmE-Era-EngA-EngB-Septin-like GTPase superfamily. EngB GTPase family. Requires Mg(2+) as cofactor.

Necessary for normal cell division and for the maintenance of normal septation. The protein is Probable GTP-binding protein EngB of Thermoanaerobacter pseudethanolicus (strain ATCC 33223 / 39E) (Clostridium thermohydrosulfuricum).